We begin with the raw amino-acid sequence, 152 residues long: Ribosome maturation factor RimP (152 aa).

The protein belongs to the RimP family.

It is found in the cytoplasm. In terms of biological role, required for maturation of 30S ribosomal subunits. This Sodalis glossinidius (strain morsitans) protein is Ribosome maturation factor RimP.